A 643-amino-acid polypeptide reads, in one-letter code: Threonine--tRNA ligase (643 aa).

In terms of domain architecture, TGS spans 1-61; sequence MPIITLPDGS…SEDSSLEIIT (61 aa). Residues 243 to 534 are catalytic; the sequence is DHRRIGKALD…ITEEYAGFFP (292 aa). Positions 334, 385, and 511 each coordinate Zn(2+).

This sequence belongs to the class-II aminoacyl-tRNA synthetase family. In terms of assembly, homodimer. The cofactor is Zn(2+).

It is found in the cytoplasm. It catalyses the reaction tRNA(Thr) + L-threonine + ATP = L-threonyl-tRNA(Thr) + AMP + diphosphate + H(+). Catalyzes the attachment of threonine to tRNA(Thr) in a two-step reaction: L-threonine is first activated by ATP to form Thr-AMP and then transferred to the acceptor end of tRNA(Thr). Also edits incorrectly charged L-seryl-tRNA(Thr). The chain is Threonine--tRNA ligase from Actinobacillus pleuropneumoniae serotype 7 (strain AP76).